The sequence spans 218 residues: Peptidase E (218 aa).

Residues Ser-123, Asp-138, and His-160 each act as charge relay system in the active site.

The protein belongs to the peptidase S51 family.

The protein resides in the cytoplasm. The enzyme catalyses Dipeptidase E catalyzes the hydrolysis of dipeptides Asp-|-Xaa. It does not act on peptides with N-terminal Glu, Asn or Gln, nor does it cleave isoaspartyl peptides.. Hydrolyzes dipeptides containing N-terminal aspartate residues. May play a role in allowing the cell to use peptide aspartate to spare carbon otherwise required for the synthesis of the aspartate family of amino acids. The protein is Peptidase E of Haemophilus influenzae (strain ATCC 51907 / DSM 11121 / KW20 / Rd).